Here is a 199-residue protein sequence, read N- to C-terminus: Photosystem I reaction center subunit XI (199 aa).

2 helical membrane-spanning segments follow: residues 108-128 and 165-185; these read ITAG…LLVL and FWLG…TLHL.

This sequence belongs to the PsaL family.

Its subcellular location is the cellular thylakoid membrane. The polypeptide is Photosystem I reaction center subunit XI (Prochlorococcus marinus (strain MIT 9515)).